A 180-amino-acid chain; its full sequence is Adenine phosphoribosyltransferase (180 aa).

This sequence belongs to the purine/pyrimidine phosphoribosyltransferase family. As to quaternary structure, homodimer.

It localises to the cytoplasm. The catalysed reaction is AMP + diphosphate = 5-phospho-alpha-D-ribose 1-diphosphate + adenine. The protein operates within purine metabolism; AMP biosynthesis via salvage pathway; AMP from adenine: step 1/1. Catalyzes a salvage reaction resulting in the formation of AMP, that is energically less costly than de novo synthesis. The sequence is that of Adenine phosphoribosyltransferase from Marinobacter nauticus (strain ATCC 700491 / DSM 11845 / VT8) (Marinobacter aquaeolei).